Reading from the N-terminus, the 250-residue chain is Acetylglutamate kinase (250 aa).

Substrate is bound by residues 41–42 (GG), Arg-63, and Asn-156.

The protein belongs to the acetylglutamate kinase family. ArgB subfamily.

The protein localises to the cytoplasm. It catalyses the reaction N-acetyl-L-glutamate + ATP = N-acetyl-L-glutamyl 5-phosphate + ADP. It participates in amino-acid biosynthesis; L-arginine biosynthesis; N(2)-acetyl-L-ornithine from L-glutamate: step 2/4. Functionally, catalyzes the ATP-dependent phosphorylation of N-acetyl-L-glutamate. The polypeptide is Acetylglutamate kinase (Listeria welshimeri serovar 6b (strain ATCC 35897 / DSM 20650 / CCUG 15529 / CIP 8149 / NCTC 11857 / SLCC 5334 / V8)).